The primary structure comprises 565 residues: MDLEHESKRPLYIPYAGPILLEFPLLNKGSAFSEEERNTFNLNGLLPEAIETIEEQVERAYRQFCDFHSATEQHIYLRNIQDTNETLFYRLLRSHLSEMMPIIYTPTVGEACEHFSYIYRRARGLFIAYPNRDRIDDMLQNATKQNVKVIVVTDGERILGLGDQGIGGMGIPIGKLSLYTACGGISPAYTLPVVLDVGTNNPQRLNDPLYMGWRHPRITGDEYNAFVEEFIQAVKRRWPDVLLQFEDFAQKNAMPLLSRYRDRLCCFNDDIQGTAAVTLGSLIAASHAAGSRLRDQTITFLGAGSAGCGIAEQIIAQMIAEGLSDEEARTRIFMVDRFGLLTDRLPNLLDFQSRLVQKRQALAGWQTESEGISLLDVVRNAHPTVLIGVSGQPGLFSEAIVREMHSHCPRPIIMPLSNPTSRVEARPEDIINWTDGAALVASGSPFEPVLYQGERYPIAQCNNAYIFPGIGLGVLASGARRVTDGMLMAASRALADSSPLARDGHGSLLPDLKDIQQVSRDIAFQVAKAAQRQGVAVQTSDEALLQAIEHNFWLPIYRSYKRTSF.

The Proton donor role is filled by tyrosine 104. Arginine 157 contributes to the NAD(+) binding site. The active-site Proton acceptor is lysine 175. A divalent metal cation is bound by residues glutamate 246, aspartate 247, and aspartate 270. Residues aspartate 270 and asparagine 418 each contribute to the NAD(+) site.

It belongs to the malic enzymes family. In terms of assembly, homotetramer. Mg(2+) serves as cofactor. Requires Mn(2+) as cofactor.

It carries out the reaction (S)-malate + NAD(+) = pyruvate + CO2 + NADH. It catalyses the reaction oxaloacetate + H(+) = pyruvate + CO2. This chain is NAD-dependent malic enzyme, found in Edwardsiella ictaluri (strain 93-146).